The following is a 130-amino-acid chain: Small ribosomal subunit protein uS9 (130 aa).

Residues 108 to 130 (SREKERKKYGQRGARARFQYSKR) are disordered.

This sequence belongs to the universal ribosomal protein uS9 family.

The protein is Small ribosomal subunit protein uS9 of Solidesulfovibrio magneticus (strain ATCC 700980 / DSM 13731 / RS-1) (Desulfovibrio magneticus).